Reading from the N-terminus, the 182-residue chain is ATP-dependent protease subunit HslV (182 aa).

Residue threonine 12 is part of the active site. Na(+) is bound by residues alanine 167, cysteine 170, and threonine 173.

Belongs to the peptidase T1B family. HslV subfamily. As to quaternary structure, a double ring-shaped homohexamer of HslV is capped on each side by a ring-shaped HslU homohexamer. The assembly of the HslU/HslV complex is dependent on binding of ATP.

It localises to the cytoplasm. The catalysed reaction is ATP-dependent cleavage of peptide bonds with broad specificity.. Its activity is regulated as follows. Allosterically activated by HslU binding. Its function is as follows. Protease subunit of a proteasome-like degradation complex believed to be a general protein degrading machinery. This chain is ATP-dependent protease subunit HslV, found in Pelodictyon phaeoclathratiforme (strain DSM 5477 / BU-1).